The following is a 140-amino-acid chain: MTIKTYHLYVVSAEKQIFSGLVEKIQVTGIEGDLGIFPRHTPLLTQIKPGLIYLVTEDGKTEYIYISGGILEVQLNIVTVLADTAIRGEDLDEKRAINSKLQAQENIKNLNYDMSYTQASVELAKALAKLRVIKLIKKAI.

The protein belongs to the ATPase epsilon chain family. In terms of assembly, F-type ATPases have 2 components, CF(1) - the catalytic core - and CF(0) - the membrane proton channel. CF(1) has five subunits: alpha(3), beta(3), gamma(1), delta(1), epsilon(1). CF(0) has three main subunits: a, b and c.

Its subcellular location is the cell membrane. In terms of biological role, produces ATP from ADP in the presence of a proton gradient across the membrane. The polypeptide is ATP synthase epsilon chain (Baumannia cicadellinicola subsp. Homalodisca coagulata).